Here is a 445-residue protein sequence, read N- to C-terminus: Phosphoglucosamine mutase (445 aa).

The active-site Phosphoserine intermediate is S102. Mg(2+)-binding residues include S102, D241, D243, and D245. Residue S102 is modified to Phosphoserine.

Belongs to the phosphohexose mutase family. Requires Mg(2+) as cofactor. Post-translationally, activated by phosphorylation.

It carries out the reaction alpha-D-glucosamine 1-phosphate = D-glucosamine 6-phosphate. Its function is as follows. Catalyzes the conversion of glucosamine-6-phosphate to glucosamine-1-phosphate. The chain is Phosphoglucosamine mutase from Escherichia coli O139:H28 (strain E24377A / ETEC).